The following is a 160-amino-acid chain: Non-secretory ribonuclease (160 aa).

Residues methionine 1 to alanine 27 form the signal peptide. Tryptophan 34 is a glycosylation site (C-linked (Man) tryptophan). Histidine 42 functions as the Proton acceptor in the catalytic mechanism. The N-linked (GlcNAc...) asparagine glycan is linked to asparagine 44. Disulfide bonds link cysteine 50–cysteine 110, cysteine 64–cysteine 122, cysteine 82–cysteine 137, and cysteine 89–cysteine 98. 3'-nitrotyrosine is present on tyrosine 60. Lysine 65–threonine 69 contacts substrate. N-linked (GlcNAc...) asparagine glycosylation is found at asparagine 92, asparagine 111, and asparagine 138. The active-site Proton donor is the histidine 155.

The protein belongs to the pancreatic ribonuclease family. Interacts with and forms a tight 1:1 complex with RNH1. Dimerization of two such complexes may occur.

It localises to the lysosome. The protein localises to the cytoplasmic granule. It catalyses the reaction an [RNA] containing cytidine + H2O = an [RNA]-3'-cytidine-3'-phosphate + a 5'-hydroxy-ribonucleotide-3'-[RNA].. It carries out the reaction an [RNA] containing uridine + H2O = an [RNA]-3'-uridine-3'-phosphate + a 5'-hydroxy-ribonucleotide-3'-[RNA].. Its function is as follows. This is a non-secretory ribonuclease. It is a pyrimidine specific nuclease with a slight preference for U. Cytotoxin and helminthotoxin. Possesses a wide variety of biological activities. The chain is Non-secretory ribonuclease (RNASE2) from Papio hamadryas (Hamadryas baboon).